The following is a 353-amino-acid chain: Regulatory protein E2 (353 aa).

The interval 1–200 (MEEISARLNA…QVIVCPTSIS (200 aa)) is transactivation domain. Positions 206–215 (TTETADIQTD) are enriched in polar residues. The disordered stretch occupies residues 206 to 234 (TTETADIQTDNDNRPPQAAAKRRRPADTT). Residues 273–353 (VAPIVHLKGE…VQISTGFMTL (81 aa)) form a DNA-binding domain region. Lysine 280 participates in a covalent cross-link: Glycyl lysine isopeptide (Lys-Gly) (interchain with G-Cter in SUMO).

It belongs to the papillomaviridae E2 protein family. Binds DNA as homodimer. Interacts with protein E1; this interaction greatly increases E1 DNA-binding activity. Interacts with protein L1; this interaction enhances E2-dependent replication and transcription activation. Interacts with protein L2; this interaction inhibits E2 transcriptional activity but not DNA replication function E2. Interacts with protein E7; this interaction inhibits E7 oncogenic activity. Interacts with host TAF1; this interaction modulates E2-dependent transcriptional regulation. Interacts with host BRD4; this interaction mediates E2 transcriptional activation function. Additionally, the interaction with host BRD4 on mitotic chromosomes mediates tethering of the viral genome. Interacts with host TOPBP1; this interaction is required for optimal viral DNA replication. Post-translationally, phosphorylated. Sumoylation plays a regulatory role in E2 transcriptional activity.

The protein localises to the host nucleus. Plays a role in the initiation of viral DNA replication. A dimer of E2 interacts with a dimer of E1 in order to improve specificity of E1 DNA binding activity. Once the complex recognizes and binds DNA at specific sites, the E2 dimer is removed from DNA. E2 also regulates viral transcription through binding to the E2RE response element (5'-ACCNNNNNNGGT-3') present in multiple copies in the regulatory regions of the viral genome. Activates or represses transcription depending on E2RE's position with regards to proximal promoter elements including the TATA-box. Repression occurs by sterically hindering the assembly of the transcription initiation complex. The protein is Regulatory protein E2 of Homo sapiens (Human).